A 77-amino-acid polypeptide reads, in one-letter code: Probable Vpr-like protein (77 aa).

The Nuclear export signal motif lies at 34–42 (LIRLLQGLL). The Nuclear localization signal signature appears at 44-53 (RLRFRKPKSK).

The protein resides in the virion. It localises to the host nucleus. In terms of biological role, seems to function as a Vpr-like protein, since it mediates host cell cycle arrest in G2 phase. Cell cycle arrest creates a favorable environment for maximizing viral expression and production. This Felidae (cat family) protein is Probable Vpr-like protein.